Reading from the N-terminus, the 627-residue chain is Sphingomyelin phosphodiesterase (627 aa).

Residues 1–44 (MPHHRASSGQDHLRAGWEQRLERSLPAPRVGLLWMGLGLALVLA) form the signal peptide. Residues 83 to 167 (QNLTCPACKV…LLGSSCGHWD (85 aa)) enclose the Saposin B-type domain. Residue Asn84 is glycosylated (N-linked (GlcNAc...) asparagine). 3 disulfide bridges follow: Cys87/Cys163, Cys90/Cys155, and Cys118/Cys129. Residue Asn173 is glycosylated (N-linked (GlcNAc...) asparagine). Residues Asp204 and His206 each contribute to the Zn(2+) site. 2 disulfide bridges follow: Cys219–Cys224 and Cys225–Cys248. Positions 276 and 316 each coordinate Zn(2+). 2 N-linked (GlcNAc...) asparagine glycosylation sites follow: Asn333 and Asn393. Residues Cys383 and Cys429 are joined by a disulfide bond. Zn(2+) contacts are provided by His423, His455, and His457. Ser506 is modified (phosphoserine). Asn518 carries N-linked (GlcNAc...) asparagine glycosylation. 2 disulfide bridges follow: Cys582-Cys586 and Cys592-Cys605. The N-linked (GlcNAc...) asparagine glycan is linked to Asn611.

The protein belongs to the acid sphingomyelinase family. Monomer. Interacts with SORT1; the interaction is required for SMPD1 targeting to lysosomes. Zn(2+) is required as a cofactor. Proteolytically processed. Mature lysosomal form arises from C-terminal proteolytic processing of pro-sphingomyelin phosphodiesterase. Post-translationally, both lysosomal and secreted forms are glycosylated but they show a differential pattern of glycosylation. In terms of processing, phosphorylated at Ser-506 by PRKCD upon stress stimuli. Phosphorylation is required for secretion. This form is generated following cleavage by CASP7 in the extracellular milieu. It shows increased activity.

It is found in the lysosome. It localises to the lipid droplet. The protein resides in the secreted. Its subcellular location is the extracellular space. The catalysed reaction is a sphingomyelin + H2O = phosphocholine + an N-acylsphing-4-enine + H(+). It catalyses the reaction N-(octadecanoyl)-sphing-4-enine-1-phosphocholine + H2O = N-octadecanoylsphing-4-enine + phosphocholine + H(+). The enzyme catalyses a 1,2-diacyl-sn-glycero-3-phosphocholine + H2O = phosphocholine + a 1,2-diacyl-sn-glycerol + H(+). It carries out the reaction 1,2-dihexadecanoyl-sn-glycero-3-phosphocholine + H2O = 1,2-dihexadecanoyl-sn-glycerol + phosphocholine + H(+). Its activity is regulated as follows. Hydrolysis of liposomal sphingomyelin is stimulated by incorporation of diacylglycerol (DAG), ceramide and free fatty acids into the liposomal membranes. Phosphatidylcholine hydrolysis is inhibited by incorporation of cholesterol, ceramide, DAG, monoacylglycerol and fatty acids. Converts sphingomyelin to ceramide. Exists as two enzymatic forms that arise from alternative trafficking of a single protein precursor, one that is targeted to the endolysosomal compartment, whereas the other is released extracellularly. However, in response to various forms of stress, lysosomal exocytosis may represent a major source of the secretory form. Functionally, in the lysosomes, converts sphingomyelin to ceramide. Plays an important role in the export of cholesterol from the intraendolysosomal membranes. Also has phospholipase C activities toward 1,2-diacylglycerolphosphocholine and 1,2-diacylglycerolphosphoglycerol. Modulates stress-induced apoptosis through the production of ceramide. In terms of biological role, when secreted, modulates cell signaling with its ability to reorganize the plasma membrane by converting sphingomyelin to ceramide. Secreted form is increased in response to stress and inflammatory mediators such as IL1B, IFNG or TNF as well as upon infection with bacteria and viruses. Produces the release of ceramide in the outer leaflet of the plasma membrane playing a central role in host defense. Ceramide reorganizes these rafts into larger signaling platforms that are required to internalize P.aeruginosa, induce apoptosis and regulate the cytokine response in infected cells. In wounded cells, the lysosomal form is released extracellularly in the presence of Ca(2+) and promotes endocytosis and plasma membrane repair. Its function is as follows. This form is generated following cleavage by CASP7 in the extracellular milieu in response to bacterial infection. It shows increased ability to convert sphingomyelin to ceramide and promotes plasma membrane repair. Plasma membrane repair by ceramide counteracts the action of gasdermin-D (GSDMD) perforin (PRF1) pores that are formed in response to bacterial infection. (Microbial infection) Secretion is activated by bacteria such as P.aeruginosa, this activation results in the release of ceramide in the outer leaflet of the plasma membrane which facilitates the infection. In Mus musculus (Mouse), this protein is Sphingomyelin phosphodiesterase.